Consider the following 140-residue polypeptide: Putative nickel-responsive regulator 2 (140 aa).

His-81, His-92, His-94, and Cys-100 together coordinate Ni(2+).

Belongs to the transcriptional regulatory CopG/NikR family. It depends on Ni(2+) as a cofactor.

In terms of biological role, transcriptional regulator. The chain is Putative nickel-responsive regulator 2 from Methanosarcina mazei (strain ATCC BAA-159 / DSM 3647 / Goe1 / Go1 / JCM 11833 / OCM 88) (Methanosarcina frisia).